Here is a 346-residue protein sequence, read N- to C-terminus: Cell division protein ZipA (346 aa).

The Periplasmic portion of the chain corresponds to 1 to 6 (MEDLQL). Residues 7–27 (VLFVLGAIAIVAVLVHGFWSI) traverse the membrane as a helical segment. The Cytoplasmic portion of the chain corresponds to 28-346 (RRQQPKSLKD…DYLHRIRANA (319 aa)). Positions 116–146 (EPSMAQPDFSLQSPTAKEQHRGPKASRQEPV) are disordered.

This sequence belongs to the ZipA family. Interacts with FtsZ via their C-terminal domains.

Its subcellular location is the cell inner membrane. In terms of biological role, essential cell division protein that stabilizes the FtsZ protofilaments by cross-linking them and that serves as a cytoplasmic membrane anchor for the Z ring. Also required for the recruitment to the septal ring of downstream cell division proteins. The sequence is that of Cell division protein ZipA from Shewanella sp. (strain ANA-3).